Here is a 396-residue protein sequence, read N- to C-terminus: NADH-quinone oxidoreductase subunit D (396 aa).

Belongs to the complex I 49 kDa subunit family. NDH-1 is composed of 14 different subunits. Subunits NuoB, C, D, E, F, and G constitute the peripheral sector of the complex.

Its subcellular location is the cell inner membrane. The catalysed reaction is a quinone + NADH + 5 H(+)(in) = a quinol + NAD(+) + 4 H(+)(out). Functionally, NDH-1 shuttles electrons from NADH, via FMN and iron-sulfur (Fe-S) centers, to quinones in the respiratory chain. The immediate electron acceptor for the enzyme in this species is believed to be ubiquinone. Couples the redox reaction to proton translocation (for every two electrons transferred, four hydrogen ions are translocated across the cytoplasmic membrane), and thus conserves the redox energy in a proton gradient. This Brucella abortus (strain S19) protein is NADH-quinone oxidoreductase subunit D.